Reading from the N-terminus, the 209-residue chain is Large ribosomal subunit protein uL3 (209 aa).

The interval 129-153 is disordered; that stretch reads SRGPMSHGSKFHRAPGSMGAASDPS.

Belongs to the universal ribosomal protein uL3 family. In terms of assembly, part of the 50S ribosomal subunit. Forms a cluster with proteins L14 and L19.

Functionally, one of the primary rRNA binding proteins, it binds directly near the 3'-end of the 23S rRNA, where it nucleates assembly of the 50S subunit. This Clostridium perfringens (strain 13 / Type A) protein is Large ribosomal subunit protein uL3.